A 220-amino-acid chain; its full sequence is Sec-independent protein translocase protein TatB (220 aa).

A helical membrane pass occupies residues 1 to 21 (MFDIGFSELLLVLVIGLVVLG). The segment at 190 to 220 (VTKQQIDTIDSHGTDLSSAGPSRIHQPGGDQ) is disordered.

This sequence belongs to the TatB family. As to quaternary structure, the Tat system comprises two distinct complexes: a TatABC complex, containing multiple copies of TatA, TatB and TatC subunits, and a separate TatA complex, containing only TatA subunits. Substrates initially bind to the TatABC complex, which probably triggers association of the separate TatA complex to form the active translocon.

It is found in the cell inner membrane. Its function is as follows. Part of the twin-arginine translocation (Tat) system that transports large folded proteins containing a characteristic twin-arginine motif in their signal peptide across membranes. Together with TatC, TatB is part of a receptor directly interacting with Tat signal peptides. TatB may form an oligomeric binding site that transiently accommodates folded Tat precursor proteins before their translocation. The sequence is that of Sec-independent protein translocase protein TatB from Yersinia pseudotuberculosis serotype I (strain IP32953).